The primary structure comprises 181 residues: tRNA-splicing endonuclease (181 aa).

Residues tyrosine 118, histidine 126, and lysine 157 contribute to the active site.

The protein belongs to the tRNA-intron endonuclease family. Archaeal short subfamily. In terms of assembly, homotetramer; although the tetramer contains four active sites, only two participate in the cleavage. Therefore, it should be considered as a dimer of dimers.

The catalysed reaction is pretRNA = a 3'-half-tRNA molecule with a 5'-OH end + a 5'-half-tRNA molecule with a 2',3'-cyclic phosphate end + an intron with a 2',3'-cyclic phosphate and a 5'-hydroxyl terminus.. Functionally, endonuclease that removes tRNA introns. Cleaves pre-tRNA at the 5'- and 3'-splice sites to release the intron. The products are an intron and two tRNA half-molecules bearing 2',3' cyclic phosphate and 5'-OH termini. Recognizes a pseudosymmetric substrate in which 2 bulged loops of 3 bases are separated by a stem of 4 bp. This is tRNA-splicing endonuclease from Sulfolobus acidocaldarius (strain ATCC 33909 / DSM 639 / JCM 8929 / NBRC 15157 / NCIMB 11770).